The sequence spans 201 residues: UPF0301 protein MAP_0045 (201 aa).

Belongs to the UPF0301 (AlgH) family.

The chain is UPF0301 protein MAP_0045 from Mycolicibacterium paratuberculosis (strain ATCC BAA-968 / K-10) (Mycobacterium paratuberculosis).